The chain runs to 278 residues: E3 ubiquitin-protein ligase CHIP (278 aa).

TPR repeat units lie at residues 10-43 (AERL…SPNV), 45-77 (AYWT…VHNS), and 78-111 (VKAH…GRCS). A coiled-coil region spans residues 143-194 (ELNSLKETCEAALNQQRALDMSRTEESSDEAYTAHTERLKALERVFKKAAEE). Positions 199–273 (EVPDYLCCNI…AAYLEKHVWA (75 aa)) constitute a U-box domain.

As to quaternary structure, interacts with HSC70-4, PP2AA1, PP2AA3 and PP2A5, as well as with UBC8, UBC9 and UBC10. Also interacts with the chloroplastic proteolytic subunits ClpP4, FtsH1 and FtsH2.

It catalyses the reaction S-ubiquitinyl-[E2 ubiquitin-conjugating enzyme]-L-cysteine + [acceptor protein]-L-lysine = [E2 ubiquitin-conjugating enzyme]-L-cysteine + N(6)-ubiquitinyl-[acceptor protein]-L-lysine.. It participates in protein modification; protein ubiquitination. Has E3 ubiquitin-protein ligase activity and may target misfolded substrates towards proteasomal degradation. Regulates the activity of some serine/threonine-protein phosphatases by E3 ubiquitin-protein ligase activity. Required for responses to biotic and abiotic stresses such as auxin, abscisic acid (ABA), low and high temperature and darkness, probably through the activation of serine/threonine-protein phosphatase and the subsequent modification of the plasma membrane composition. Regulates the chloroplastic Clp proteolytic activity in response to stresses. Ubiquitylates FtsH1, a component of the chloroplast FtsH protease, and affects protein degradation in chloroplasts. Mediates plastid precursor degradation to prevent cytosolic precursor accumulation, together with the molecular chaperone HSC70-4. Mediates ubiquitination of transit peptides and thereby led to their degradation through the ubiquitin-proteasome system. This chain is E3 ubiquitin-protein ligase CHIP, found in Arabidopsis thaliana (Mouse-ear cress).